The sequence spans 155 residues: SsrA-binding protein (155 aa).

This sequence belongs to the SmpB family.

It is found in the cytoplasm. Its function is as follows. Required for rescue of stalled ribosomes mediated by trans-translation. Binds to transfer-messenger RNA (tmRNA), required for stable association of tmRNA with ribosomes. tmRNA and SmpB together mimic tRNA shape, replacing the anticodon stem-loop with SmpB. tmRNA is encoded by the ssrA gene; the 2 termini fold to resemble tRNA(Ala) and it encodes a 'tag peptide', a short internal open reading frame. During trans-translation Ala-aminoacylated tmRNA acts like a tRNA, entering the A-site of stalled ribosomes, displacing the stalled mRNA. The ribosome then switches to translate the ORF on the tmRNA; the nascent peptide is terminated with the 'tag peptide' encoded by the tmRNA and targeted for degradation. The ribosome is freed to recommence translation, which seems to be the essential function of trans-translation. The sequence is that of SsrA-binding protein from Streptococcus suis (strain 98HAH33).